The following is a 437-amino-acid chain: Trigger factor (437 aa).

The region spanning 161 to 246 (DDQVNIDFVG…VNSVSAPVLP (86 aa)) is the PPIase FKBP-type domain.

Belongs to the FKBP-type PPIase family. Tig subfamily.

The protein localises to the cytoplasm. The enzyme catalyses [protein]-peptidylproline (omega=180) = [protein]-peptidylproline (omega=0). In terms of biological role, involved in protein export. Acts as a chaperone by maintaining the newly synthesized protein in an open conformation. Functions as a peptidyl-prolyl cis-trans isomerase. The chain is Trigger factor from Pseudomonas putida (strain ATCC 700007 / DSM 6899 / JCM 31910 / BCRC 17059 / LMG 24140 / F1).